The following is a 179-amino-acid chain: Protein HEADING DATE 3A (179 aa).

It belongs to the phosphatidylethanolamine-binding protein family. Expressed in the inner region of the SAM, stem and leaf blade vascular tissues (at protein level).

It is found in the cytoplasm. The protein resides in the nucleus. In terms of biological role, probable mobile flower-promoting signal (florigen) that moves from the leaf to the shoot apical meristem (SAM) and induces flowering. Promotes the transition from vegetative growth to flowering downstream of HD1 and EHD1 under short day (SD) conditions. Acts upstream of MADS14 and MADS15. The polypeptide is Protein HEADING DATE 3A (HD3A) (Oryza sativa subsp. japonica (Rice)).